The chain runs to 335 residues: Tetraacyldisaccharide 4'-kinase (335 aa).

58-65 (TVGGSGKT) provides a ligand contact to ATP.

The protein belongs to the LpxK family.

It catalyses the reaction a lipid A disaccharide + ATP = a lipid IVA + ADP + H(+). The protein operates within glycolipid biosynthesis; lipid IV(A) biosynthesis; lipid IV(A) from (3R)-3-hydroxytetradecanoyl-[acyl-carrier-protein] and UDP-N-acetyl-alpha-D-glucosamine: step 6/6. Its function is as follows. Transfers the gamma-phosphate of ATP to the 4'-position of a tetraacyldisaccharide 1-phosphate intermediate (termed DS-1-P) to form tetraacyldisaccharide 1,4'-bis-phosphate (lipid IVA). This is Tetraacyldisaccharide 4'-kinase from Shewanella oneidensis (strain ATCC 700550 / JCM 31522 / CIP 106686 / LMG 19005 / NCIMB 14063 / MR-1).